The primary structure comprises 64 residues: H/ACA ribonucleoprotein complex subunit 3-like protein (64 aa).

This sequence belongs to the NOP10 family. Component of the small nucleolar ribonucleoprotein particles containing H/ACA-type snoRNAs (H/ACA snoRNPs).

It is found in the nucleus. The protein localises to the nucleolus. Required for ribosome biogenesis. Part of a complex which catalyzes pseudouridylation of rRNA. This involves the isomerization of uridine such that the ribose is subsequently attached to C5, instead of the normal N1. Pseudouridine ('psi') residues may serve to stabilize the conformation of rRNAs. This Arabidopsis thaliana (Mouse-ear cress) protein is H/ACA ribonucleoprotein complex subunit 3-like protein.